We begin with the raw amino-acid sequence, 501 residues long: Orsellinic acid/F9775 biosynthesis cluster protein D (501 aa).

Residues 137-189 (EVTPTTEDEDDEENESENDEEEGDVDLEEQEDDNGGRQSTTVTTSPGPSAPSV) are disordered. The segment covering 142 to 169 (TEDEDDEENESENDEEEGDVDLEEQEDD) has biased composition (acidic residues). A compositionally biased stretch (polar residues) spans 172-183 (GRQSTTVTTSPG).

Functionally, part of the gene cluster that mediates the biosynthesis of orsellinic acid, as well as of the cathepsin K inhibitors F9775 A and F9775 B. The non-reducing polyketide synthase orsA produces orsellinic acid by condensing acetyl-CoA with 3 malonyl-CoA units. Further modifications by the decarboxylase orsB and the tyrosinase-like protein orsC lead to the production of F9775 A and F9775 B. The functions of orsD and orsE remain unclear since only orsB and orsC are required to convert orsellinic acid into F9775 A and F9775 B. This is Orsellinic acid/F9775 biosynthesis cluster protein D from Emericella nidulans (strain FGSC A4 / ATCC 38163 / CBS 112.46 / NRRL 194 / M139) (Aspergillus nidulans).